Consider the following 266-residue polypeptide: Putative carbamate hydrolase RutD (266 aa).

The 102-residue stretch at 14–115 (PVVVLISGLG…TVLISVNGWL (102 aa)) folds into the AB hydrolase-1 domain.

It belongs to the AB hydrolase superfamily. Hydrolase RutD family.

It carries out the reaction carbamate + 2 H(+) = NH4(+) + CO2. Involved in pyrimidine catabolism. May facilitate the hydrolysis of carbamate, a reaction that can also occur spontaneously. This is Putative carbamate hydrolase RutD from Shigella sonnei (strain Ss046).